Consider the following 330-residue polypeptide: MRIRYGWELALAALLVIEIVSFGAINPRMLDLNMLLFSTSDFICIGIVALPLTMVIVSGGIDISFGSTIGLCAIALGVLFQSGVPMPLAILLTLLLGALCGLINAGLIIYTKVNPLVITLGTLYLFAGSALLLSGMAGATGYEGIGGFPMAFTDFANLDVLGLPVPLIIFLICLLVFWLWLHKTHAGRNVFLIGQSPRVALYSAIPVNRTLCALYAMTGLASAVAAVLLVSYFGSARSDLGASFLMPAITAVVLGGANIYGGSGAIIGTAIAVLLVGYLQQGLQMAGVPNQVSSALSGALLIVVVVGRSVSLHRQQIKEWLARRANNPLP.

Residues 1 to 4 lie on the Cytoplasmic side of the membrane; it reads MRIR. Residues 5–25 form a helical membrane-spanning segment; the sequence is YGWELALAALLVIEIVSFGAI. Residues 26 to 42 lie on the Periplasmic side of the membrane; the sequence is NPRMLDLNMLLFSTSDF. Residues 43 to 63 traverse the membrane as a helical segment; it reads ICIGIVALPLTMVIVSGGIDI. Topologically, residues 64-67 are cytoplasmic; that stretch reads SFGS. Transmembrane regions (helical) follow at residues 68-88 and 89-109; these read TIGL…PMPL and AILL…GLII. Topologically, residues 110–115 are cytoplasmic; the sequence is YTKVNP. Residues 116 to 136 form a helical membrane-spanning segment; sequence LVITLGTLYLFAGSALLLSGM. At 137–159 the chain is on the periplasmic side; sequence AGATGYEGIGGFPMAFTDFANLD. A helical membrane pass occupies residues 160-180; it reads VLGLPVPLIIFLICLLVFWLW. Topologically, residues 181 to 209 are cytoplasmic; it reads LHKTHAGRNVFLIGQSPRVALYSAIPVNR. A helical membrane pass occupies residues 210–230; it reads TLCALYAMTGLASAVAAVLLV. Over 231–237 the chain is Periplasmic; it reads SYFGSAR. 2 consecutive transmembrane segments (helical) span residues 238-258 and 259-279; these read SDLG…GGAN and IYGG…VGYL. Over 280–285 the chain is Periplasmic; the sequence is QQGLQM. Residues 286–306 form a helical membrane-spanning segment; it reads AGVPNQVSSALSGALLIVVVV. At 307–330 the chain is on the cytoplasmic side; the sequence is GRSVSLHRQQIKEWLARRANNPLP.

This sequence belongs to the binding-protein-dependent transport system permease family. AraH/RbsC subfamily. The complex is composed of two ATP-binding proteins (LsrA), two transmembrane proteins (LsrC and LsrD) and a solute-binding protein (LsrB).

Its subcellular location is the cell inner membrane. Functionally, part of the ABC transporter complex LsrABCD involved in autoinducer 2 (AI-2) import. Probably responsible for the translocation of the substrate across the membrane. In Escherichia coli O157:H7, this protein is Autoinducer 2 import system permease protein LsrD (lsrD).